The following is a 489-amino-acid chain: MTITPEQLIAMLPLLVVILTVVVVMLSIAWRRDHFTIATLTATGFIIALGSLYYVNALGVVDVTTLYHVDGYSSFFTALTIIAGLGTVAFAYPWLEGYQDNKEEFYMLVAIAVIGGILLSSAHHLASMFIGIELLTLPLFGLIGYAFQQRPSLEASIKYMLLSAAASSFLLFGMALLYAEAGNLSFTAMGQSLSDSNIHKPLVLAGLGMMLVGIGFKLSLFPFQLWTPDVYQGAPAPTGAFLATASKIGIFAVVMRLFLEAPAADSETLRMILGFMAIASILFGNIMALTQKNVKRLLGYSSVSHLGYLLVALIVLQYSPILAQETAEIYLAGYLFASLGAFGAIAVASSPYNKGELESLEDYRGLFWRRPVAAVVMSLMMLSLAGVPITLGFIGKLYVILAGIDSSLWWLTGMVVLGSAIGLFYYLRAAAIVFLRKPDNDNAPAVTTTSQNMATLITLVCAIIVIVLGVWPQPLIELTRFAIIAPAIN.

14 helical membrane-spanning segments follow: residues 8-28 (LIAM…MLSI), 35-55 (FTIA…LYYV), 75-95 (FFTA…YPWL), 105-125 (FYML…AHHL), 127-147 (SMFI…GYAF), 159-179 (YMLL…LLYA), 203-223 (VLAG…LFPF), 235-255 (PAPT…AVVM), 271-291 (MILG…ALTQ), 303-323 (VSHL…PILA), 329-349 (IYLA…AVAS), 374-394 (AVVM…LGFI), 407-427 (SLWW…FYYL), and 456-476 (LITL…QPLI).

The protein belongs to the complex I subunit 2 family. NDH-1 is composed of 13 different subunits. Subunits NuoA, H, J, K, L, M, N constitute the membrane sector of the complex.

It is found in the cell inner membrane. The enzyme catalyses a quinone + NADH + 5 H(+)(in) = a quinol + NAD(+) + 4 H(+)(out). Its function is as follows. NDH-1 shuttles electrons from NADH, via FMN and iron-sulfur (Fe-S) centers, to quinones in the respiratory chain. The immediate electron acceptor for the enzyme in this species is believed to be ubiquinone. Couples the redox reaction to proton translocation (for every two electrons transferred, four hydrogen ions are translocated across the cytoplasmic membrane), and thus conserves the redox energy in a proton gradient. The sequence is that of NADH-quinone oxidoreductase subunit N from Proteus mirabilis (strain HI4320).